The following is a 203-amino-acid chain: Amelogenin, Y isoform (203 aa).

The first 16 residues, 1–16 (MGTWILFACLVGAAFA), serve as a signal peptide directing secretion. Residues 116-180 (MPVPGQQSMT…PPLPPMFPMR (65 aa)) are disordered. The span at 120–130 (GQQSMTPTQHH) shows a compositional bias: polar residues. Residues 131 to 142 (QPNLPLPAQQPF) are compositionally biased toward low complexity. The span at 143–180 (QPQPVQPLPHQPMQPQPPVQPMQPLLPQPPLPPMFPMR) shows a compositional bias: pro residues.

The protein belongs to the amelogenin family.

It is found in the secreted. It localises to the extracellular space. The protein localises to the extracellular matrix. Its function is as follows. Plays a role in biomineralization. Seems to regulate the formation of crystallites during the secretory stage of tooth enamel development. Thought to play a major role in the structural organization and mineralization of developing enamel. This Pan troglodytes (Chimpanzee) protein is Amelogenin, Y isoform (AMELY).